Reading from the N-terminus, the 40-residue chain is Photosystem II reaction center protein J (40 aa).

Residues 8–28 traverse the membrane as a helical segment; sequence IPLWVIGTVAGIPVIGLIGIF.

The protein belongs to the PsbJ family. In terms of assembly, PSII is composed of 1 copy each of membrane proteins PsbA, PsbB, PsbC, PsbD, PsbE, PsbF, PsbH, PsbI, PsbJ, PsbK, PsbL, PsbM, PsbT, PsbX, PsbY, PsbZ, Psb30/Ycf12, at least 3 peripheral proteins of the oxygen-evolving complex and a large number of cofactors. It forms dimeric complexes.

The protein localises to the plastid. The protein resides in the chloroplast thylakoid membrane. One of the components of the core complex of photosystem II (PSII). PSII is a light-driven water:plastoquinone oxidoreductase that uses light energy to abstract electrons from H(2)O, generating O(2) and a proton gradient subsequently used for ATP formation. It consists of a core antenna complex that captures photons, and an electron transfer chain that converts photonic excitation into a charge separation. The sequence is that of Photosystem II reaction center protein J from Nasturtium officinale (Watercress).